The chain runs to 131 residues: Large ribosomal subunit protein bL19 (131 aa).

This sequence belongs to the bacterial ribosomal protein bL19 family.

In terms of biological role, this protein is located at the 30S-50S ribosomal subunit interface and may play a role in the structure and function of the aminoacyl-tRNA binding site. In Rhodopseudomonas palustris (strain BisA53), this protein is Large ribosomal subunit protein bL19.